A 294-amino-acid chain; its full sequence is MRLKSIMCAALFVVAGQAAAQEKSITIATEGAYAPWNFSGPNGKLDGFEIDLAKVLCERMKVKCQIVAQNWDGIIPSLVAKKYDVIMAAMSVTPKRQEVISFSTPYGAHMNGFAVMKDSKLADMPGSGEVYSLNTQADAAKKRIDDVNAFLDGTTVGVQGSTTGSQFLENYFKNSVDIKEYKTVEEFNIDLMSGRVDAVFASATVLTAAFEQPDMKDAKVVGPLFSGDELGKVAVGLRKDDAALKAEFRLGAVGLRKEDAALKADFDSSIKAVADEGTIKTLSSKWFKVDVTPH.

The first 20 residues, 1–20, serve as a signal peptide directing secretion; it reads MRLKSIMCAALFVVAGQAAA. C57 and C64 are disulfide-bonded.

The protein belongs to the bacterial solute-binding protein 3 family.

It is found in the periplasm. Its function is as follows. Component of the octopine active transport system probably consisting of four subunits: Q, M, P and T. The chain is Octopine-binding periplasmic protein (occT) from Rhizobium meliloti (Ensifer meliloti).